Here is a 66-residue protein sequence, read N- to C-terminus: Cold shock protein 2 (66 aa).

The region spanning Gly4–Val63 is the CSD domain.

Its subcellular location is the cytoplasm. The sequence is that of Cold shock protein 2 (cspL) from Lactiplantibacillus plantarum (strain ATCC BAA-793 / NCIMB 8826 / WCFS1) (Lactobacillus plantarum).